The chain runs to 159 residues: Regulatory protein RecX (159 aa).

This sequence belongs to the RecX family.

Its subcellular location is the cytoplasm. In terms of biological role, modulates RecA activity. This is Regulatory protein RecX from Acinetobacter baylyi (strain ATCC 33305 / BD413 / ADP1).